We begin with the raw amino-acid sequence, 82 residues long: Large ribosomal subunit protein uL23 (82 aa).

Belongs to the universal ribosomal protein uL23 family. In terms of assembly, part of the 50S ribosomal subunit. Contacts protein L29.

Functionally, binds to 23S rRNA. One of the proteins that surrounds the polypeptide exit tunnel on the outside of the ribosome. The protein is Large ribosomal subunit protein uL23 of Methanosarcina mazei (strain ATCC BAA-159 / DSM 3647 / Goe1 / Go1 / JCM 11833 / OCM 88) (Methanosarcina frisia).